Here is a 1528-residue protein sequence, read N- to C-terminus: Multidrug resistance-associated protein 1 (1528 aa).

Residues 1–33 (MALRSFCSADGSDPLWDWNVTWHTSNPDFTKCF) are Extracellular-facing. N-linked (GlcNAc...) asparagine glycosylation is present at Asn19. Residues 34–54 (QNTVLTWVPCFYLWSCFPLYF) form a helical membrane-spanning segment. At 55-74 (FYLSRHDRGYIQMTHLNKTK) the chain is on the cytoplasmic side. A helical membrane pass occupies residues 75–95 (TALGFFLWIICWADLFYSFWE). The Extracellular segment spans residues 96-100 (RSQGV). A helical membrane pass occupies residues 101-121 (LRAPVLLVSPTLLGITMLLAT). Over 122-133 (FLIQLERRKGVQ) the chain is Cytoplasmic. A helical transmembrane segment spans residues 134 to 154 (SSGIMLTFWLVALLCALAILR). The Extracellular portion of the chain corresponds to 155 to 172 (SKIISALKKDAHVDVFRD). Residues 173–193 (STFYLYFTLVLVQLVLSCFSD) form a helical membrane-spanning segment. At 194-317 (CSPLFSETVH…KDREPSLFKV (124 aa)) the chain is on the cytoplasmic side. Tyr277 is subject to Phosphotyrosine. Phosphoserine is present on Ser290. The chain crosses the membrane as a helical span at residues 318-338 (LYKTFGPYFLMSFLYKALHDL). Residues 326-609 (FLMSFLYKAL…LPMVISSIVQ (284 aa)) form the ABC transmembrane type-1 1 domain. Residues 339 to 364 (MMFAGPKILELIINFVNDREAPDWQG) lie on the Extracellular side of the membrane. Residues 365-385 (YFYTALLFVSACLQTLALHQY) traverse the membrane as a helical segment. Residues 386 to 441 (FHICFVSGMRIKTAVVGAVYRKALLITNAARKSSTVGEIVNLMSVDAQRFMDLATY) are Cytoplasmic-facing. Residues 442 to 462 (INMIWSAPLQVILALYFLWLS) form a helical membrane-spanning segment. The Extracellular portion of the chain corresponds to 463–465 (LGP). Residues 466 to 486 (SVLAGVAVMILMVPLNAVMAM) traverse the membrane as a helical segment. The Cytoplasmic segment spans residues 487-548 (KTKTYQVAHM…VLKKSAYLAA (62 aa)). Lys504 is modified (N6-succinyllysine). Residues 549–569 (VGTFTWVCTPFLVALSTFAVF) traverse the membrane as a helical segment. Over 570–591 (VTVDERNILDAKKAFVSLALFN) the chain is Extracellular. Residues 592–612 (ILRFPLNILPMVISSIVQASV) traverse the membrane as a helical segment. At 613 to 963 (SLKRLRIFLS…VQLSVYWNYM (351 aa)) the chain is on the cytoplasmic side. Positions 644 to 868 (ITVKNATFTW…DGAFAEFLRT (225 aa)) constitute an ABC transporter 1 domain. 678 to 685 (GQVGCGKS) is an ATP binding site. Disordered regions lie at residues 876 to 895 (LASEDDSVSGSGKESKPVEN) and 909 to 929 (RHLSNSSSHSGDTSQQHSSIA). Phosphoserine occurs at positions 878, 882, 912, and 927. Over residues 910-929 (HLSNSSSHSGDTSQQHSSIA) the composition is skewed to polar residues. Residues 964-984 (KAIGLFITFLSIFLFLCNHVS) traverse the membrane as a helical segment. Residues 971 to 1253 (TFLSIFLFLC…LVRMSSEMET (283 aa)) form the ABC transmembrane type-1 2 domain. The Extracellular segment spans residues 985–1022 (ALASNYWLSLWTDDPPVVNGTQANRNFRLSVYGALGIL). N-linked (GlcNAc...) asparagine glycosylation occurs at Asn1003. A helical transmembrane segment spans residues 1023-1043 (QGAAIFGYSMAVSIGGIFASR). The Cytoplasmic portion of the chain corresponds to 1044-1086 (RLHLDLLYNVLRSPMSFFERTPSGNLVNRFSKELDTVDSMIPQ). Residues 1087-1107 (VIKMFMGSLFSVIGAVIIILL) traverse the membrane as a helical segment. A topological domain (extracellular) is located at residue Ala1108. The chain crosses the membrane as a helical span at residues 1109–1129 (TPIAAVIIPPLGLVYFFVQRF). At 1130–1200 (YVASSRQLKR…VANRWLAVRL (71 aa)) the chain is on the cytoplasmic side. A helical transmembrane segment spans residues 1201-1221 (ECVGNCIVLFAALFAVISRHS). The Extracellular portion of the chain corresponds to 1222-1223 (LS). The chain crosses the membrane as a helical span at residues 1224–1244 (AGLVGLSVSYSLQITAYLNWL). The Cytoplasmic portion of the chain corresponds to 1245-1528 (VRMSSEMETN…YSMAKDAGLV (284 aa)). The ABC transporter 2 domain maps to 1290–1524 (VEFRDYCLRY…RGIFYSMAKD (235 aa)). ATP is bound at residue 1324-1331 (GRTGAGKS).

It belongs to the ABC transporter superfamily. ABCC family. Conjugate transporter (TC 3.A.1.208) subfamily.

The protein localises to the cell membrane. It is found in the basolateral cell membrane. The enzyme catalyses ATP + H2O + xenobioticSide 1 = ADP + phosphate + xenobioticSide 2.. It carries out the reaction an S-substituted glutathione(in) + ATP + H2O = an S-substituted glutathione(out) + ADP + phosphate + H(+). It catalyses the reaction leukotriene C4(in) + ATP + H2O = leukotriene C4(out) + ADP + phosphate + H(+). The catalysed reaction is sphing-4-enine 1-phosphate(in) + ATP + H2O = sphing-4-enine 1-phosphate(out) + ADP + phosphate + H(+). The enzyme catalyses 17beta-estradiol 17-O-(beta-D-glucuronate)(in) + ATP + H2O = 17beta-estradiol 17-O-(beta-D-glucuronate)(out) + ADP + phosphate + H(+). It carries out the reaction vincristine(in) + ATP + H2O = vincristine(out) + ADP + phosphate + H(+). It catalyses the reaction daunorubicin(in) + ATP + H2O = daunorubicin(out) + ADP + phosphate + H(+). The catalysed reaction is 2',3'-cGAMP(in) + ATP + H2O = 2',3'-cGAMP(out) + ADP + phosphate + H(+). The enzyme catalyses S-[(2E,6E,10E)-geranylgeranyl]-L-glutathione(in) + ATP + H2O = S-[(2E,6E,10E)-geranylgeranyl]-L-glutathione(out) + ADP + phosphate + H(+). It carries out the reaction prostaglandin A2-S-(R)-glutathione(in) + ATP + H2O = prostaglandin A2-S-(R)-glutathione(out) + ADP + phosphate + H(+). It catalyses the reaction prostaglandin A2-S-(S)-glutathione(in) + ATP + H2O = prostaglandin A2-S-(S)-glutathione(out) + ADP + phosphate + H(+). With respect to regulation, MK 571 inhibits sphingosine 1-phosphate and leukotriene C4 export. Functionally, mediates export of organic anions and drugs from the cytoplasm. Mediates ATP-dependent transport of glutathione and glutathione conjugates, leukotriene C4, estradiol-17-beta-o-glucuronide, methotrexate, antiviral drugs and other xenobiotics. Confers resistance to anticancer drugs by decreasing accumulation of drugs in cells, and by mediating ATP- and GSH-dependent drug export. Hydrolyzes ATP with low efficiency. Catalyzes the export of sphingosine 1-phosphate from mast cells independently of their degranulation. Participates in inflammatory response by allowing export of leukotriene C4 from leukotriene C4-synthesizing cells. Mediates ATP-dependent, GSH-independent cyclic GMP-AMP (cGAMP) export. Thus, by limiting intracellular cGAMP concentrations negatively regulates the cGAS-STING pathway. Exports S-geranylgeranyl-glutathione (GGG) in lymphoid cells and stromal compartments of lymphoid organs. ABCC1 (via extracellular transport) with GGT5 (via GGG catabolism) establish GGG gradients within lymphoid tissues to position P2RY8-positive lymphocytes at germinal centers in lymphoid follicles and restrict their chemotactic transmigration from blood vessels to the bone marrow parenchyma. Mediates basolateral export of GSH-conjugated R- and S-prostaglandin A2 diastereomers in polarized epithelial cells. This Mus musculus (Mouse) protein is Multidrug resistance-associated protein 1.